The primary structure comprises 134 residues: ATP synthase epsilon chain, chloroplastic (134 aa).

It belongs to the ATPase epsilon chain family. In terms of assembly, F-type ATPases have 2 components, CF(1) - the catalytic core - and CF(0) - the membrane proton channel. CF(1) has five subunits: alpha(3), beta(3), gamma(1), delta(1), epsilon(1). CF(0) has three main subunits: a, b and c.

The protein localises to the plastid. It localises to the chloroplast thylakoid membrane. In terms of biological role, produces ATP from ADP in the presence of a proton gradient across the membrane. The protein is ATP synthase epsilon chain, chloroplastic of Pelargonium hortorum (Common geranium).